Reading from the N-terminus, the 94-residue chain is Transcription factor CPC (94 aa).

Residues 1 to 10 form an S1, required for cell-to-cell movements region; it reads MFRSDKAEKM. The segment covering 1 to 11 has biased composition (basic and acidic residues); that stretch reads MFRSDKAEKMD. The segment at 1–25 is disordered; the sequence is MFRSDKAEKMDKRRRRQSKAKASCS. One can recognise a Myb-like domain in the interval 30 to 80; sequence SIEWEAVKMSEEEEDLISRMYKLVGDRWELIAGRIPGRTPEEIERYWLMKH. The interval 76-79 is S2, required for cell-to-cell movements and nuclear localization; that stretch reads WLMK.

In terms of assembly, interacts with GL3 and BHLH2. Interacts with SIEL. Expressed in trichomes and in young developing leaves, as well as in root hair and stele cells (pericycle and vascular tissues). Expressed in epidermal root hairless cells (atrichoblasts) and moves to root hair cells (trichoblasts) by a cell-to-cell movement through plasmodesmata (at protein level).

It localises to the nucleus. Functionally, transcription factor. Determines the fate of epidermal cell differentiation. Represses trichome development by lateral inhibition. Together with GL3 or BHLH2, promotes the formation of hair developing cells (H position) in root epidermis, probably by inhibiting non-hair cell formation. Represses the expression of GL2 and WER in H cells. Positively regulates stomatal formation in the hypocotyl. This Arabidopsis thaliana (Mouse-ear cress) protein is Transcription factor CPC (CPC).